The following is a 620-amino-acid chain: Putative ribonuclease H protein At1g65750 (620 aa).

The 131-residue stretch at 456-586 (CVGWVKVNTD…ADGLANYAFS (131 aa)) folds into the RNase H type-1 domain. Positions 465, 505, 529, and 578 each coordinate Mg(2+).

The cofactor is Mg(2+).

The enzyme catalyses Endonucleolytic cleavage to 5'-phosphomonoester.. In Arabidopsis thaliana (Mouse-ear cress), this protein is Putative ribonuclease H protein At1g65750.